A 165-amino-acid polypeptide reads, in one-letter code: Peptide deformylase (165 aa).

Residues Cys-88 and His-130 each coordinate Fe cation. Glu-131 is a catalytic residue. Residue His-134 participates in Fe cation binding.

Belongs to the polypeptide deformylase family. Requires Fe(2+) as cofactor.

It catalyses the reaction N-terminal N-formyl-L-methionyl-[peptide] + H2O = N-terminal L-methionyl-[peptide] + formate. Functionally, removes the formyl group from the N-terminal Met of newly synthesized proteins. Requires at least a dipeptide for an efficient rate of reaction. N-terminal L-methionine is a prerequisite for activity but the enzyme has broad specificity at other positions. The polypeptide is Peptide deformylase (Borreliella burgdorferi (strain ATCC 35210 / DSM 4680 / CIP 102532 / B31) (Borrelia burgdorferi)).